We begin with the raw amino-acid sequence, 211 residues long: Pyridoxine/pyridoxamine 5'-phosphate oxidase (211 aa).

Residues 7-10 (RRDY) and Lys-65 contribute to the substrate site. Residues 60–65 (RIVLLK), 75–76 (YT), Arg-81, Lys-82, and Gln-104 each bind FMN. Residues Tyr-122, Arg-126, and Ser-130 each coordinate substrate. FMN-binding positions include 139–140 (QS) and Trp-184. 190 to 192 (RLH) contributes to the substrate binding site. Arg-194 lines the FMN pocket.

This sequence belongs to the pyridoxamine 5'-phosphate oxidase family. Homodimer. FMN serves as cofactor.

It carries out the reaction pyridoxamine 5'-phosphate + O2 + H2O = pyridoxal 5'-phosphate + H2O2 + NH4(+). The enzyme catalyses pyridoxine 5'-phosphate + O2 = pyridoxal 5'-phosphate + H2O2. It functions in the pathway cofactor metabolism; pyridoxal 5'-phosphate salvage; pyridoxal 5'-phosphate from pyridoxamine 5'-phosphate: step 1/1. The protein operates within cofactor metabolism; pyridoxal 5'-phosphate salvage; pyridoxal 5'-phosphate from pyridoxine 5'-phosphate: step 1/1. Its function is as follows. Catalyzes the oxidation of either pyridoxine 5'-phosphate (PNP) or pyridoxamine 5'-phosphate (PMP) into pyridoxal 5'-phosphate (PLP). The sequence is that of Pyridoxine/pyridoxamine 5'-phosphate oxidase from Aliivibrio fischeri (strain ATCC 700601 / ES114) (Vibrio fischeri).